A 364-amino-acid polypeptide reads, in one-letter code: MAQQTPLYEQHTLCGARMVDFHGWMMPLHYGSQLDEHHAVRTDAGMFDVSHMTIVDLHGSRTREFLRYLLANDVAKLTKTGKALYSGMLNASGGVIDDLIVYYFTEDFFRLVVNSATREKDLSWITQHAEPYAIDITVRDDLSLIAVQGPNAQEKAATLFTDQQRHAVEGMKPFFGVQAGDLFIATTGYTGEAGYEIAMPNEKAADFWRALVEAGVKPCGLGARDTLRLEAGMNLYGQEMDEGISPLAANMGWTIAWEPADRDFIGREALEMQREKGHEQLVGLVMTEKGVLRNELPVRFTDAQGNQQEGIITSGTFSPTLGYSIALARVPAGIGETAIVQIRNREMPVKVTKPVFVRNGKAVA.

Belongs to the GcvT family. As to quaternary structure, the glycine cleavage system is composed of four proteins: P, T, L and H.

The catalysed reaction is N(6)-[(R)-S(8)-aminomethyldihydrolipoyl]-L-lysyl-[protein] + (6S)-5,6,7,8-tetrahydrofolate = N(6)-[(R)-dihydrolipoyl]-L-lysyl-[protein] + (6R)-5,10-methylene-5,6,7,8-tetrahydrofolate + NH4(+). Its function is as follows. The glycine cleavage system catalyzes the degradation of glycine. The sequence is that of Aminomethyltransferase from Salmonella paratyphi A (strain AKU_12601).